The primary structure comprises 155 residues: Ubiquinone biosynthesis protein COQ4 homolog, mitochondrial (155 aa).

Belongs to the COQ4 family. In terms of assembly, component of a multi-subunit COQ enzyme complex. It depends on Zn(2+) as a cofactor.

The protein resides in the mitochondrion inner membrane. The catalysed reaction is a 4-hydroxy-3-methoxy-5-(all-trans-polyprenyl)benzoate + H(+) = a 2-methoxy-6-(all-trans-polyprenyl)phenol + CO2. It functions in the pathway cofactor biosynthesis; ubiquinone biosynthesis. Lyase that catalyzes the C1-decarboxylation of 4-hydroxy-3-methoxy-5-(all-trans-polyprenyl)benzoic acid into 2-methoxy-6-(all-trans-polyprenyl)phenol during ubiquinone biosynthesis. This Cryptosporidium hominis protein is Ubiquinone biosynthesis protein COQ4 homolog, mitochondrial.